The primary structure comprises 339 residues: Dual specificity protein phosphatase 12 (339 aa).

M1 carries the N-acetylmethionine modification. The tract at residues 1–25 is disordered; sequence MLEAQGSNHGCERQAPTASPASSAG. Residues 26–170 form the Tyrosine-protein phosphatase domain; it reads HAVEVRPGLY…LKLYEAMGYE (145 aa). C114 (phosphocysteine intermediate) is an active-site residue. A substrate-binding site is contributed by 115–120; it reads HAGVSR. Phosphoserine is present on S334.

Belongs to the protein-tyrosine phosphatase family. Non-receptor class dual specificity subfamily. As to quaternary structure, monomer. The cofactor is Zn(2+).

The protein localises to the nucleus. Its subcellular location is the cytoplasm. It is found in the cytosol. It catalyses the reaction O-phospho-L-tyrosyl-[protein] + H2O = L-tyrosyl-[protein] + phosphate. It carries out the reaction O-phospho-L-seryl-[protein] + H2O = L-seryl-[protein] + phosphate. The catalysed reaction is O-phospho-L-threonyl-[protein] + H2O = L-threonyl-[protein] + phosphate. Its function is as follows. Dual specificity phosphatase; can dephosphorylate both phosphotyrosine and phosphoserine or phosphothreonine residues. Can dephosphorylate glucokinase (in vitro). Has phosphatase activity with the synthetic substrate 6,8-difluoro-4-methylumbelliferyl phosphate and other in vitro substrates. The protein is Dual specificity protein phosphatase 12 (Dusp12) of Mus musculus (Mouse).